The following is a 511-amino-acid chain: Lysine--tRNA ligase (511 aa).

A disordered region spans residues 1-20; sequence MQKNTSQPTNTNEQSNQPSL. Mg(2+) contacts are provided by glutamate 422 and glutamate 429.

It belongs to the class-II aminoacyl-tRNA synthetase family. In terms of assembly, homodimer. Mg(2+) serves as cofactor.

The protein localises to the cytoplasm. It catalyses the reaction tRNA(Lys) + L-lysine + ATP = L-lysyl-tRNA(Lys) + AMP + diphosphate. This is Lysine--tRNA ligase from Chlorobium chlorochromatii (strain CaD3).